We begin with the raw amino-acid sequence, 310 residues long: Proline dehydrogenase (310 aa).

Position 98 (K98) interacts with substrate. The active site involves D135. FAD-binding positions include M136, Q166, 187–192 (RMVKGA), 229–230 (TH), and 292–295 (RIAE). The active site involves R187. Residue 291–292 (RR) coordinates substrate.

The protein belongs to the proline dehydrogenase family. FAD serves as cofactor.

The catalysed reaction is L-proline + a quinone = (S)-1-pyrroline-5-carboxylate + a quinol + H(+). It participates in amino-acid degradation; L-proline degradation into L-glutamate; L-glutamate from L-proline: step 1/2. Converts proline to delta-1-pyrroline-5-carboxylate. This Deinococcus radiodurans (strain ATCC 13939 / DSM 20539 / JCM 16871 / CCUG 27074 / LMG 4051 / NBRC 15346 / NCIMB 9279 / VKM B-1422 / R1) protein is Proline dehydrogenase.